Reading from the N-terminus, the 737-residue chain is MAKQVFQTTFAGRELIVETGQVAKQANGSVVVRYGESTVLTAAVMSKKMATGDFFPLQVNYEEKMYAAGKFPGGFMKREGRPSTDATLTARLIDRPIRPMFAEGFRNEVQVINTVLSYDENASAPMAAMFGSSLALSISDIPFDGPIAGVQVGYVDGQIIINPSQEQAEQSLLELTVAGTKHAINMVESGAKELSEEIMLEALLKGHEAVKELIAFQEEIVAAVGKEKAEVELLHVDAELQAEIIAAYNSDLQKAVQVEEKLAREAATQVVKDQVTAVYEEKYADHEEFDRIMRDVAEILEQMEHAEVRRLITEDKVRPDGRKVDEIRPLDAVVDFLPRVHGSGLFTRGQTQALSVLTLAPMGETQIIDGLDLEYKKRFMHHYNFPQYSVGETGRYGAPGRREIGHGALGERALAQVLPSLEEFPYAIRLVAEVLESNGSSSQASICAGTLALMAGGVPIKAPVAGIAMGLISDGNNYTVLTDIQGLEDHFGDMDFKVAGTRDGITALQMDIKIQGITAEILTEALAQAKKARFEILDVIEATIPEVRPELAPTAPKIDTIKIDVDKIKIVIGKGGETIDKIIAETGVKIDIDEEGNVSIYSSDQDAINRAKEIIAGLVREAKVDEVYRAKVVRIEKFGAFVNLFDKTDALVHISEMAWTRTNRVEDLVEIGDEVDVKVIKIDEKGRIDASMKALLPRPPKPEHDEKGEKSERPHRPRHQKDHKPKKEFTETPKDSE.

The Mg(2+) site is built by D489 and D495. A KH domain is found at 556–615 (PKIDTIKIDVDKIKIVIGKGGETIDKIIAETGVKIDIDEEGNVSIYSSDQDAINRAKEII). The region spanning 625–693 (DEVYRAKVVR…EKGRIDASMK (69 aa)) is the S1 motif domain. The segment at 691–737 (SMKALLPRPPKPEHDEKGEKSERPHRPRHQKDHKPKKEFTETPKDSE) is disordered. The segment covering 700-714 (PKPEHDEKGEKSERP) has biased composition (basic and acidic residues). A compositionally biased stretch (basic residues) spans 715–724 (HRPRHQKDHK). Positions 725–737 (PKKEFTETPKDSE) are enriched in basic and acidic residues.

This sequence belongs to the polyribonucleotide nucleotidyltransferase family. Mg(2+) serves as cofactor.

It localises to the cytoplasm. The catalysed reaction is RNA(n+1) + phosphate = RNA(n) + a ribonucleoside 5'-diphosphate. Involved in mRNA degradation. Catalyzes the phosphorolysis of single-stranded polyribonucleotides processively in the 3'- to 5'-direction. The polypeptide is Polyribonucleotide nucleotidyltransferase (Streptococcus pneumoniae (strain JJA)).